The following is a 146-amino-acid chain: uncharacterized protein (146 aa).

The 102-residue stretch at Glu-34–Phe-135 folds into the Glutaredoxin domain. Cys-54 provides a ligand contact to [2Fe-2S] cluster.

This sequence belongs to the glutaredoxin family. Monothiol subfamily.

This is an uncharacterized protein from Caenorhabditis elegans.